The chain runs to 652 residues: Acetyl-coenzyme A synthetase (652 aa).

CoA contacts are provided by residues 191 to 194 (RAGR), T311, and N335. ATP-binding positions include 387–389 (GEP), 411–416 (DTWWQT), D500, and R515. S523 serves as a coordination point for CoA. R526 provides a ligand contact to ATP. Mg(2+) is bound by residues V537, H539, and I542. Position 584 (R584) interacts with CoA. K609 carries the post-translational modification N6-acetyllysine.

It belongs to the ATP-dependent AMP-binding enzyme family. Mg(2+) is required as a cofactor. Acetylated. Deacetylation by the SIR2-homolog deacetylase activates the enzyme.

The enzyme catalyses acetate + ATP + CoA = acetyl-CoA + AMP + diphosphate. Its function is as follows. Catalyzes the conversion of acetate into acetyl-CoA (AcCoA), an essential intermediate at the junction of anabolic and catabolic pathways. Acs undergoes a two-step reaction. In the first half reaction, Acs combines acetate with ATP to form acetyl-adenylate (AcAMP) intermediate. In the second half reaction, it can then transfer the acetyl group from AcAMP to the sulfhydryl group of CoA, forming the product AcCoA. Functionally, enables the cell to use acetate during aerobic growth to generate energy via the TCA cycle, and biosynthetic compounds via the glyoxylate shunt. Acetylates CheY, the response regulator involved in flagellar movement and chemotaxis. This Cronobacter sakazakii (strain ATCC BAA-894) (Enterobacter sakazakii) protein is Acetyl-coenzyme A synthetase.